Here is a 531-residue protein sequence, read N- to C-terminus: Transactivator/viroplasmin protein (531 aa).

Disordered stretches follow at residues 80–101 (ASGK…TATG) and 505–531 (CKSE…SVLV). Polar residues-rich tracts occupy residues 91 to 100 (SATSPEQTAT) and 505 to 517 (CKSE…TSEE). The segment covering 518 to 531 (GLQESEDEDFSVLV) has biased composition (acidic residues).

It belongs to the caulimoviridae viroplasmin family.

It is found in the host cytoplasm. Functionally, enhances the translation of downstream ORFs on polycistronic mRNAs. The chain is Transactivator/viroplasmin protein from Cestrum yellow leaf curling virus (CmYLCV).